Consider the following 794-residue polypeptide: MDLNLGKCCGSRSSKKESWRSVLLLAYQSLGVVYGDLSISPLYVFKSTFAEDIQHSETNEEIYGVMSFVFWTLTLVPLLKYVFIVLRADDNGEGGTFALYSLICRHVKVSLLPNRQVSDEALSTYKLEHPPEKNHDSCVKRYLEKHKWLHTALLLLVLLGTCMVIGDGLLTPAISVFSAVSGLELNMSKEHHQYAVIPITCFILVCLFSLQHFGTHRVGFVFAPIVLTWLLCISGIGLYNIIQWNPHIYKALSPTYMFMFLRKTRVSGWMSLGGILLCITGAEAMFADLGHFNYAAIQIAFTFLVYPALILAYMGQAAYLSRHHHSAHAIGFYVSVPKCLHWPVLAVAILASVVGSQAIISGTFSIINQSQSLGCFPRVKVIHTSDKMHGQIYIPEINWMLMILCIAVTIGFRDVKHLGNASGLAVMAVMLVTTCLTSLVIVLCWHKPPILALAFLLFFGSIELLYFSASLTKFREGAWLPILLSLIFMIIMFVWHYTTIKKYEFDLQNKVSLEWLLALGPSLGISRVPGIGLVFTDLTSGIPANFSRFVTNLPAFHRVLVFVCVKSVPVPFVPPAERYLVGRVGPVDHRSYRCIVRYGYRDVHQDVDSFETELVSKLADFIRYDWHKRTQQEDDNARSVQSNESSSESRLAVIGTVAYEIEDNLQPESVSIGFSTVESMEDVIQMAEPAPTATIRRVRFAVEENSYEDEGSTSSAEADAELRSELRDLLAAQEAGTAFILGHSHVKAKQGSSVMKRLAVNFGYNFLRRNCRGPDVALKVPPVSLLEVGMVYVV.

The Cytoplasmic segment spans residues 1-21 (MDLNLGKCCGSRSSKKESWRS). Residues 22 to 42 (VLLLAYQSLGVVYGDLSISPL) form a helical membrane-spanning segment. At 43–64 (YVFKSTFAEDIQHSETNEEIYG) the chain is on the extracellular side. The helical transmembrane segment at 65 to 85 (VMSFVFWTLTLVPLLKYVFIV) threads the bilayer. Topologically, residues 86 to 153 (LRADDNGEGG…EKHKWLHTAL (68 aa)) are cytoplasmic. A helical transmembrane segment spans residues 154–174 (LLLVLLGTCMVIGDGLLTPAI). Topologically, residues 175–193 (SVFSAVSGLELNMSKEHHQ) are extracellular. Residues 194 to 214 (YAVIPITCFILVCLFSLQHFG) traverse the membrane as a helical segment. Residues 215 to 217 (THR) are Cytoplasmic-facing. Residues 218-238 (VGFVFAPIVLTWLLCISGIGL) form a helical membrane-spanning segment. The Extracellular portion of the chain corresponds to 239–265 (YNIIQWNPHIYKALSPTYMFMFLRKTR). The chain crosses the membrane as a helical span at residues 266–286 (VSGWMSLGGILLCITGAEAMF). The Cytoplasmic portion of the chain corresponds to 287–294 (ADLGHFNY). A helical membrane pass occupies residues 295-315 (AAIQIAFTFLVYPALILAYMG). The Extracellular portion of the chain corresponds to 316 to 339 (QAAYLSRHHHSAHAIGFYVSVPKC). The helical transmembrane segment at 340-360 (LHWPVLAVAILASVVGSQAII) threads the bilayer. Residues 361–391 (SGTFSIINQSQSLGCFPRVKVIHTSDKMHGQ) lie on the Cytoplasmic side of the membrane. The helical transmembrane segment at 392-412 (IYIPEINWMLMILCIAVTIGF) threads the bilayer. The Extracellular segment spans residues 413-417 (RDVKH). A run of 2 helical transmembrane segments spans residues 418–438 (LGNA…CLTS) and 439–459 (LVIV…LLFF). Topologically, residues 460–476 (GSIELLYFSASLTKFRE) are extracellular. A helical membrane pass occupies residues 477–497 (GAWLPILLSLIFMIIMFVWHY). Topologically, residues 498 to 794 (TTIKKYEFDL…LLEVGMVYVV (297 aa)) are cytoplasmic.

Belongs to the HAK/KUP transporter (TC 2.A.72.3) family. In terms of tissue distribution, slightly detected in roots, stems, leaves and flowers of mature plants and in potassium-starved plants.

It is found in the cell membrane. Low-affinity potassium transporter. Could mediate the potassium-dependent cell expansion in growing tissues. The sequence is that of Potassium transporter 2 (POT2) from Arabidopsis thaliana (Mouse-ear cress).